The sequence spans 134 residues: Secretin (134 aa).

The N-terminal stretch at 1-21 is a signal peptide; the sequence is MATRALLLLLLLPPLLLLAGC. Positions 22–31 are excised as a propeptide; that stretch reads AARPAPPRAP. Val59 carries the post-translational modification Valine amide. A Phosphoserine modification is found at Ser63. Positions 63–134 are excised as a propeptide; sequence SQQDPENNTA…PAAEGSPMPP (72 aa).

This sequence belongs to the glucagon family.

It localises to the secreted. Its function is as follows. Hormone involved in different processes, such as regulation of the pH of the duodenal content, food intake and water homeostasis. Exerts its biological effects by binding to secretin receptor (SCTR), a G-protein coupled receptor expressed in the basolateral domain of several cells. Acts as a key gastrointestinal hormone by regulating the pH of the duodenal content. Secreted by S cells of the duodenum in the crypts of Lieberkuehn and regulates the pH of the duodenum by (1) inhibiting the secretion of gastric acid from the parietal cells of the stomach and (2) stimulating the production of bicarbonate (NaHCO(3)) from the ductal cells of the pancreas. Production of bicarbonate is essential to neutralize the pH and ensure no damage is done to the small intestine by the gastric acid. In addition to regulating the pH of the duodenal content, plays a central role in diet induced thermogenesis: acts as a non-sympathetic brown fat (BAT) activator mediating prandial thermogenesis, which consequentially induces satiation. Mechanistically, secretin released by the gut after a meal binds to secretin receptor (SCTR) in brown adipocytes, activating brown fat thermogenesis by stimulating lipolysis, which is sensed in the brain and promotes satiation. Also able to stimulate lipolysis in white adipocytes. Also plays an important role in cellular osmoregulation: released into the systemic circulation in response to hyperosmolality and acts at different levels in the hypothalamus, pituitary and kidney to regulate water homeostasis. Also plays a role in the central nervous system, possibly by acting as a neuropeptide hormone: required for hippocampal synaptic function and neural progenitor cells maintenance. In Sus scrofa (Pig), this protein is Secretin.